Reading from the N-terminus, the 397-residue chain is MAAPSPSGGGGSGGGGGTPGPIGPPASGHPAVSSMQGKRKALKLNFANPPVKSTARFTLNPNTTGVQNPHIERLRTHSIESSGKLKISPEQHWDFTAEDLKDLGEIGRGAYGSVNKMVHKPSGQIMAVKRIRSTVDEKEQKQLLMDLDVVMRSSDCPYIVQFYGALFREGDCWICMELMSTSFDKFYKYVYSVLDDVIPEEILGKITLATVKALNHLKENLKIIHRDIKPSNILLDRSGNIKLCDFGISGQLVDSIAKTRDAGCRPYMAPERIDPSASRQGYDVRSDVWSLGITLYELATGRFPYPKWNSVFDQLTQVVKGDPPQLSNSEEREFSPSFINFVNLCLTKDESKRPKYKELLKHPFILMYEERTVEVACYVCKILDQMPATPSSPMYVD.

Residues 1–38 (MAAPSPSGGGGSGGGGGTPGPIGPPASGHPAVSSMQGK) form a disordered region. An N-acetylalanine modification is found at Ala2. Residues 7–20 (SGGGGSGGGGGTPG) are compositionally biased toward gly residues. The interval 35–50 (MQGKRKALKLNFANPP) is d domain. Arg56 bears the Asymmetric dimethylarginine; alternate mark. The residue at position 56 (Arg56) is an Omega-N-methylarginine; alternate. Phosphoserine is present on Ser88. The Protein kinase domain maps to 100-366 (LKDLGEIGRG…KELLKHPFIL (267 aa)). ATP-binding positions include 106–114 (IGRGAYGSV) and Lys129. Catalysis depends on Asp227, which acts as the Proton acceptor. Phosphoserine is present on Ser255. A Phosphothreonine modification is found at Thr259. Residues 362–385 (HPFILMYEERTVEVACYVCKILDQ) form a DVD domain region.

Belongs to the protein kinase superfamily. STE Ser/Thr protein kinase family. MAP kinase kinase subfamily. In terms of assembly, interacts with SPAG9. Interacts (via its D domain) with its substrates MAPK8/JNK1, MAPK9/JNK2, MAPK10/JNK3, MAPK11 and MAPK14. Interacts (via its DVD domain) with MAP3Ks activators like MAP3K1/MEKK1 and MAP3K11/MLK3. Interacts with ARRB1, ARRB2 and MAPK8IP3/JIP3. In terms of processing, activated by phosphorylation on Ser-255 and Thr-259 by MAP kinase kinase kinases (MAP3Ks). In terms of tissue distribution, strong expression is detected in most of the central nervous system and in liver and thymus during early stages of development. While expression in nervous system increases over time, expression in fetal liver and thymus gradually decreases as embryogenesis proceeds. High level of expression in the central nervous system persists throughout postnatal development and remained at a stable level in adult brain.

The protein localises to the cytoplasm. It is found in the nucleus. The catalysed reaction is L-seryl-[protein] + ATP = O-phospho-L-seryl-[protein] + ADP + H(+). It catalyses the reaction L-threonyl-[protein] + ATP = O-phospho-L-threonyl-[protein] + ADP + H(+). It carries out the reaction L-tyrosyl-[protein] + ATP = O-phospho-L-tyrosyl-[protein] + ADP + H(+). Activated in response to a variety of cellular stresses, including UV and gamma-irradiation, heat shock, hyperosmolarity, T-cell receptor stimulation, peroxide and inflammatory cytokines. Also activated by developmental cues. MAP2K4/MKK4 is activated by the majority of MKKKs, such as MAP3K5/ASK1, MAP3K1/MEKK1, MAP3K7/TAK1, MAP3K10/MLK2, MAP3K11/MLK3, MAP3K12/DLK and MAP3K13/LZK. Its function is as follows. Dual specificity protein kinase which acts as an essential component of the MAP kinase signal transduction pathway. Essential component of the stress-activated protein kinase/c-Jun N-terminal kinase (SAP/JNK) signaling pathway. With MAP2K7/MKK7, is the one of the only known kinase to directly activate the stress-activated protein kinase/c-Jun N-terminal kinases MAPK8/JNK1, MAPK9/JNK2 and MAPK10/JNK3. MAP2K4/MKK4 and MAP2K7/MKK7 both activate the JNKs by phosphorylation, but they differ in their preference for the phosphorylation site in the Thr-Pro-Tyr motif. MAP2K4 shows preference for phosphorylation of the Tyr residue and MAP2K7/MKK7 for the Thr residue. The phosphorylation of the Thr residue by MAP2K7/MKK7 seems to be the prerequisite for JNK activation at least in response to pro-inflammatory cytokines, while other stimuli activate both MAP2K4/MKK4 and MAP2K7/MKK7 which synergistically phosphorylate JNKs. MAP2K4 is required for maintaining peripheral lymphoid homeostasis. The MKK/JNK signaling pathway is also involved in mitochondrial death signaling pathway, including the release cytochrome c, leading to apoptosis. Whereas MAP2K7/MKK7 exclusively activates JNKs, MAP2K4/MKK4 additionally activates the p38 MAPKs MAPK11, MAPK12, MAPK13 and MAPK14. In Mus musculus (Mouse), this protein is Dual specificity mitogen-activated protein kinase kinase 4 (Map2k4).